A 189-amino-acid chain; its full sequence is uncharacterized protein (189 aa).

A signal peptide spans 1-23 (MIKTTPHKIVILMGILLSPSVFA). The interval 104–125 (SSPKLIIPQSGDSSSTTSNIGM) is disordered. Residues 113 to 123 (SGDSSSTTSNI) show a composition bias toward polar residues.

The protein belongs to the fimbrial protein family.

It is found in the fimbrium. Its function is as follows. Part of the yadCKLM-htrE-yadVN fimbrial operon. Could contribute to adhesion to various surfaces in specific environmental niches. This is an uncharacterized protein from Escherichia coli (strain K12).